A 481-amino-acid chain; its full sequence is Arginine biosynthesis bifunctional protein ArgJ, chloroplastic (481 aa).

Residues Thr-225, Lys-251, Thr-262, Glu-349, Asn-476, and Thr-481 each coordinate substrate. Thr-262 functions as the Nucleophile in the catalytic mechanism.

It belongs to the ArgJ family. In terms of assembly, heterodimer of an alpha and a beta chain.

Its subcellular location is the plastid. It is found in the chloroplast. The catalysed reaction is N(2)-acetyl-L-ornithine + L-glutamate = N-acetyl-L-glutamate + L-ornithine. The enzyme catalyses L-glutamate + acetyl-CoA = N-acetyl-L-glutamate + CoA + H(+). The protein operates within amino-acid biosynthesis; L-arginine biosynthesis; L-ornithine and N-acetyl-L-glutamate from L-glutamate and N(2)-acetyl-L-ornithine (cyclic): step 1/1. Its pathway is amino-acid biosynthesis; L-arginine biosynthesis; N(2)-acetyl-L-ornithine from L-glutamate: step 1/4. Functionally, catalyzes two activities which are involved in the cyclic version of arginine biosynthesis: the synthesis of acetylglutamate from glutamate and acetyl-CoA, and of ornithine by transacetylation between acetylornithine and glutamate. The polypeptide is Arginine biosynthesis bifunctional protein ArgJ, chloroplastic (Populus trichocarpa (Western balsam poplar)).